A 789-amino-acid chain; its full sequence is Probable Xaa-Pro aminopeptidase SNOG_02267 (789 aa).

4 residues coordinate Mn(2+): Asp-240, Asp-251, Glu-375, and Glu-416. Disordered regions lie at residues 607-658 (SMSK…TGLA) and 670-704 (NHVS…DDAL). Residues 622–637 (VISQKQIRNRRSVSST) are compositionally biased toward polar residues. The segment covering 638–650 (ARHDLRGDRERPQ) has biased composition (basic and acidic residues).

This sequence belongs to the peptidase M24B family. Requires Mn(2+) as cofactor.

It catalyses the reaction Release of any N-terminal amino acid, including proline, that is linked to proline, even from a dipeptide or tripeptide.. In terms of biological role, catalyzes the removal of a penultimate prolyl residue from the N-termini of peptides. In Phaeosphaeria nodorum (strain SN15 / ATCC MYA-4574 / FGSC 10173) (Glume blotch fungus), this protein is Probable Xaa-Pro aminopeptidase SNOG_02267.